The primary structure comprises 400 residues: Tyrosine--tRNA ligase (400 aa).

The short motif at 45–54 is the 'HIGH' region element; it reads PTAPDLHLGH. The short motif at 230 to 234 is the 'KMSKS' region element; that stretch reads KMSKS. K233 lines the ATP pocket. The region spanning 339 to 399 is the S4 RNA-binding domain; the sequence is EWIARVLVIA…GKRRFAKVII (61 aa).

The protein belongs to the class-I aminoacyl-tRNA synthetase family. TyrS type 2 subfamily. In terms of assembly, homodimer.

Its subcellular location is the cytoplasm. It carries out the reaction tRNA(Tyr) + L-tyrosine + ATP = L-tyrosyl-tRNA(Tyr) + AMP + diphosphate + H(+). Functionally, catalyzes the attachment of tyrosine to tRNA(Tyr) in a two-step reaction: tyrosine is first activated by ATP to form Tyr-AMP and then transferred to the acceptor end of tRNA(Tyr). This is Tyrosine--tRNA ligase from Helicobacter hepaticus (strain ATCC 51449 / 3B1).